A 123-amino-acid polypeptide reads, in one-letter code: Large ribosomal subunit protein uL29 (123 aa).

The protein belongs to the universal ribosomal protein uL29 family. As to quaternary structure, component of the large ribosomal subunit.

It localises to the cytoplasm. Functionally, component of the large ribosomal subunit. The ribosome is a large ribonucleoprotein complex responsible for the synthesis of proteins in the cell. This Xenopus tropicalis (Western clawed frog) protein is Large ribosomal subunit protein uL29 (rpl35).